The following is a 184-amino-acid chain: Protein GrpE (184 aa).

Polar residues predominate over residues 1–14; that stretch reads MANEQNEQSQDLSS. The tract at residues 1–35 is disordered; the sequence is MANEQNEQSQDLSSEQTTQDHEQTQTEGVEQGAEI.

Belongs to the GrpE family. Homodimer.

Its subcellular location is the cytoplasm. In terms of biological role, participates actively in the response to hyperosmotic and heat shock by preventing the aggregation of stress-denatured proteins, in association with DnaK and GrpE. It is the nucleotide exchange factor for DnaK and may function as a thermosensor. Unfolded proteins bind initially to DnaJ; upon interaction with the DnaJ-bound protein, DnaK hydrolyzes its bound ATP, resulting in the formation of a stable complex. GrpE releases ADP from DnaK; ATP binding to DnaK triggers the release of the substrate protein, thus completing the reaction cycle. Several rounds of ATP-dependent interactions between DnaJ, DnaK and GrpE are required for fully efficient folding. This Acinetobacter baylyi (strain ATCC 33305 / BD413 / ADP1) protein is Protein GrpE.